Consider the following 484-residue polypeptide: Glutamate--tRNA ligase (484 aa).

A 'HIGH' region motif is present at residues 11-21 (PSPTGLLHIGN). The 'KMSKS' region signature appears at 255 to 259 (KLSKR). Residue lysine 258 participates in ATP binding.

This sequence belongs to the class-I aminoacyl-tRNA synthetase family. Glutamate--tRNA ligase type 1 subfamily. As to quaternary structure, monomer.

The protein resides in the cytoplasm. The catalysed reaction is tRNA(Glu) + L-glutamate + ATP = L-glutamyl-tRNA(Glu) + AMP + diphosphate. Functionally, catalyzes the attachment of glutamate to tRNA(Glu) in a two-step reaction: glutamate is first activated by ATP to form Glu-AMP and then transferred to the acceptor end of tRNA(Glu). The protein is Glutamate--tRNA ligase of Streptococcus suis (strain 98HAH33).